A 540-amino-acid polypeptide reads, in one-letter code: Putative sel1-like repeat-containing protein R815 (540 aa).

Sel1-like repeat units follow at residues 129–164, 165–200, 201–236, 237–272, 273–308, and 309–344; these read IDAQ…YKEN, LFGL…KHNY, PAVK…NQGY, PLAQ…NNGC, LYAT…SENY, and LLAI…NSTK.

This is Putative sel1-like repeat-containing protein R815 from Acanthamoeba polyphaga (Amoeba).